A 693-amino-acid chain; its full sequence is Transforming growth factor beta activator LRRC33 (693 aa).

An N-terminal signal peptide occupies residues 1–19; sequence MEFPPLWLCLGFHFLIVEW. Topologically, residues 20-651 are extracellular; sequence RSGPGTATAA…CKWEQVDTGL (632 aa). Positions 29–56 constitute an LRRNT domain; sequence ASQGGCKVVDGVADCRGLNLASVPSSLP. LRR repeat units lie at residues 58 to 79, 82 to 103, 106 to 127, 133 to 155, 158 to 179, 182 to 203, 206 to 227, 228 to 239, 251 to 272, and 273 to 294; these read HSRM…SLQA, RLEN…AFRE, HLRN…SAAA, GLRR…MLQN, SLEV…IFEG, HLVE…AFDG, ELRR…SLTQ, LRFLNVSYNILE, ELEI…PQCG, and KLHT…YNTS. N-linked (GlcNAc...) asparagine glycans are attached at residues asparagine 74 and asparagine 85. Residue asparagine 155 is glycosylated (N-linked (GlcNAc...) asparagine). N-linked (GlcNAc...) asparagine glycosylation occurs at asparagine 232. N-linked (GlcNAc...) asparagine glycosylation is found at asparagine 292, asparagine 309, and asparagine 312. LRR repeat units lie at residues 329–350, 353–374, 377–398, 403–424, 427–448, 463–484, 486–507, 512–533, 537–558, 559–580, and 585–605; these read ALRF…FLKK, SLSH…EHEP, ALTE…PGLT, NLRV…LFDN, SITT…VPVD, SLRS…PFQG, SLTH…SPLW, TLQV…MDFS, NLRA…KGSL, ALRT…VVSE, and GLQT…EGWG. 2 N-linked (GlcNAc...) asparagine glycosylation sites follow: asparagine 408 and asparagine 424. A glycan (N-linked (GlcNAc...) asparagine) is linked at asparagine 500. The LRRCT domain maps to 606 to 644; it reads ALQQHFKTVADLSMVTCNLSSKIVRVVELPEGLPQGCKW. Asparagine 623 carries an N-linked (GlcNAc...) asparagine glycan. A helical transmembrane segment spans residues 652-672; the sequence is FYLVLILPSCLTLLVACTVVF. Residues 673–693 are Cytoplasmic-facing; sequence LTFKKPLLQVIKSRCHWSSIY.

It belongs to the LRRC32/LRRC33 family. In terms of assembly, interacts with TGFB1; associates via disulfide bonds with the Latency-associated peptide chain (LAP) regulatory chain of TGFB1, leading to regulate activation of TGF-beta-1. Interacts (via LRR repeats) with TLR2, TLR3, TLR4, TLR9 and probably other Toll-like receptors. Interacts with CYBB/NOX2; the interaction is direct. N-glycosylated. Mainly expressed in cells of hematopoietic origin, such as in immune organs such as lymph nodes, thymus and spleen. Among leukocytes, expressed at higher level in myeloid cell such as macrophages, neutrophils and dendritic cells. Highly expressed in central nervous system-resident macrophages, including microglia and perivascular macrophages.

The protein resides in the cell membrane. It is found in the endoplasmic reticulum membrane. Its function is as follows. Key regulator of transforming growth factor beta-1 (TGFB1) specifically required for microglia function in the nervous system. Required for activation of latent TGF-beta-1 in macrophages and microglia: associates specifically via disulfide bonds with the Latency-associated peptide (LAP), which is the regulatory chain of TGFB1, and regulates integrin-dependent activation of TGF-beta-1. TGF-beta-1 activation mediated by LRRC33/NRROS is highly localized: there is little spreading of TGF-beta-1 activated from one microglial cell to neighboring microglia, suggesting the existence of localized and selective activation of TGF-beta-1 by LRRC33/NRROS. Indirectly plays a role in Toll-like receptor (TLR) signaling: ability to inhibit TLR-mediated NF-kappa-B activation and cytokine production is probably a consequence of its role in TGF-beta-1 signaling. The chain is Transforming growth factor beta activator LRRC33 from Mus musculus (Mouse).